The primary structure comprises 454 residues: Aspartokinase 3 (454 aa).

2 ACT domains span residues 312–388 (ISKY…ALIM) and 389–454 (VVGE…VLIS).

The protein belongs to the aspartokinase family. In terms of assembly, monomer.

It carries out the reaction L-aspartate + ATP = 4-phospho-L-aspartate + ADP. It participates in amino-acid biosynthesis; L-lysine biosynthesis via DAP pathway; (S)-tetrahydrodipicolinate from L-aspartate: step 1/4. The protein operates within amino-acid biosynthesis; L-methionine biosynthesis via de novo pathway; L-homoserine from L-aspartate: step 1/3. It functions in the pathway amino-acid biosynthesis; L-threonine biosynthesis; L-threonine from L-aspartate: step 1/5. In terms of biological role, catalyzes the phosphorylation of the beta-carboxyl group of aspartic acid with ATP to yield 4-phospho-L-aspartate, which is involved in the branched biosynthetic pathway leading to the biosynthesis of amino acids threonine, isoleucine and methionine. The protein is Aspartokinase 3 (yclM) of Bacillus subtilis (strain 168).